We begin with the raw amino-acid sequence, 218 residues long: Ras-related protein RABA1i (218 aa).

Residue 20-27 (GDSGVGKS) coordinates GTP. An Effector region motif is present at residues 42-50 (SRATIGVEF). GTP-binding positions include 68-72 (DTAGQ), 126-129 (NKAD), and 156-157 (SA). S-geranylgeranyl cysteine attachment occurs at residues cysteine 215 and cysteine 216.

It belongs to the small GTPase superfamily. Rab family.

It is found in the cell membrane. Intracellular vesicle trafficking and protein transport. This Arabidopsis thaliana (Mouse-ear cress) protein is Ras-related protein RABA1i (RABA1I).